We begin with the raw amino-acid sequence, 405 residues long: Fragilysin (405 aa).

The first 25 residues, 1–25 (MFILNFNKMKNVKLLLMLGTAALLA), serve as a signal peptide directing secretion. Residue His-356 participates in Zn(2+) binding. Glu-357 is an active-site residue. Zn(2+) is bound by residues His-360 and His-366.

This sequence belongs to the peptidase M10C family. The cofactor is Zn(2+).

The protein localises to the secreted. It catalyses the reaction Broad proteolytic specificity, bonds hydrolyzed includes -Gly-|-Leu-, -Met-|-Leu-, -Phe-|-Leu-, -Cys-|-Leu-, -Leu-|-Gly-.. In terms of biological role, diarrheal toxin that hydrolyzes gelatin, azocoll, actin, tropomyosin, and fibrinogen. This is Fragilysin (btfP) from Bacteroides fragilis.